The chain runs to 194 residues: uncharacterized protein (194 aa).

This is an uncharacterized protein from Acanthamoeba polyphaga (Amoeba).